A 522-amino-acid polypeptide reads, in one-letter code: Maturase K (522 aa).

Belongs to the intron maturase 2 family. MatK subfamily.

It is found in the plastid. It localises to the chloroplast. Its function is as follows. Usually encoded in the trnK tRNA gene intron. Probably assists in splicing its own and other chloroplast group II introns. The sequence is that of Maturase K from Iris danfordiae (Danford iris).